The sequence spans 339 residues: Putative zinc metalloprotease FN1322 (339 aa).

H17 is a binding site for Zn(2+). E18 is an active-site residue. H21 serves as a coordination point for Zn(2+). A run of 3 helical transmembrane segments spans residues 88–110, 262–284, and 318–335; these read FIVL…FVTA, FGWI…LNLL, and GMIL…NDVW. The PDZ domain maps to 96 to 179; the sequence is FMNFLMAFIL…ITALVERNGK (84 aa).

It belongs to the peptidase M50B family. Requires Zn(2+) as cofactor.

The protein localises to the cell membrane. This Fusobacterium nucleatum subsp. nucleatum (strain ATCC 25586 / DSM 15643 / BCRC 10681 / CIP 101130 / JCM 8532 / KCTC 2640 / LMG 13131 / VPI 4355) protein is Putative zinc metalloprotease FN1322.